Reading from the N-terminus, the 202-residue chain is Protein-methionine-sulfoxide reductase heme-binding subunit MsrQ (202 aa).

Helical transmembrane passes span 8–28 (LAVF…AWIF), 42–62 (LGLG…LQKL), 75–95 (LGLW…VFIL), 110–130 (PYII…ITSN), 147–167 (LVYL…RADL), and 169–189 (EWTL…PSIA).

It belongs to the MsrQ family. As to quaternary structure, heterodimer of a catalytic subunit (MsrP) and a heme-binding subunit (MsrQ). FMN is required as a cofactor. Requires heme b as cofactor.

The protein localises to the cell inner membrane. Part of the MsrPQ system that repairs oxidized periplasmic proteins containing methionine sulfoxide residues (Met-O), using respiratory chain electrons. Thus protects these proteins from oxidative-stress damage caused by reactive species of oxygen and chlorine generated by the host defense mechanisms. MsrPQ is essential for the maintenance of envelope integrity under bleach stress, rescuing a wide series of structurally unrelated periplasmic proteins from methionine oxidation. MsrQ provides electrons for reduction to the reductase catalytic subunit MsrP, using the quinone pool of the respiratory chain. This is Protein-methionine-sulfoxide reductase heme-binding subunit MsrQ from Pseudomonas aeruginosa (strain ATCC 15692 / DSM 22644 / CIP 104116 / JCM 14847 / LMG 12228 / 1C / PRS 101 / PAO1).